Consider the following 440-residue polypeptide: Chromosome partition protein MukF (440 aa).

The tract at residues 208–236 (LSETSGTLRELQDTLEAAGDKLQANLLQI) is leucine-zipper.

This sequence belongs to the MukF family. Interacts, and probably forms a ternary complex, with MukE and MukB via its C-terminal region. The complex formation is stimulated by calcium or magnesium. It is required for an interaction between MukE and MukB.

It localises to the cytoplasm. It is found in the nucleoid. Its function is as follows. Involved in chromosome condensation, segregation and cell cycle progression. May participate in facilitating chromosome segregation by condensation DNA from both sides of a centrally located replisome during cell division. Not required for mini-F plasmid partitioning. Probably acts via its interaction with MukB and MukE. Overexpression results in anucleate cells. It has a calcium binding activity. The polypeptide is Chromosome partition protein MukF (Cronobacter sakazakii (strain ATCC BAA-894) (Enterobacter sakazakii)).